Reading from the N-terminus, the 613-residue chain is 4-hydroxy-3-methylbut-2-en-1-yl diphosphate synthase (flavodoxin) (613 aa).

Cysteine 521, cysteine 524, cysteine 555, and glutamate 562 together coordinate [4Fe-4S] cluster.

The protein belongs to the IspG family. [4Fe-4S] cluster serves as cofactor.

The enzyme catalyses (2E)-4-hydroxy-3-methylbut-2-enyl diphosphate + oxidized [flavodoxin] + H2O + 2 H(+) = 2-C-methyl-D-erythritol 2,4-cyclic diphosphate + reduced [flavodoxin]. It participates in isoprenoid biosynthesis; isopentenyl diphosphate biosynthesis via DXP pathway; isopentenyl diphosphate from 1-deoxy-D-xylulose 5-phosphate: step 5/6. In terms of biological role, converts 2C-methyl-D-erythritol 2,4-cyclodiphosphate (ME-2,4cPP) into 1-hydroxy-2-methyl-2-(E)-butenyl 4-diphosphate. The sequence is that of 4-hydroxy-3-methylbut-2-en-1-yl diphosphate synthase (flavodoxin) from Bacteroides thetaiotaomicron (strain ATCC 29148 / DSM 2079 / JCM 5827 / CCUG 10774 / NCTC 10582 / VPI-5482 / E50).